The sequence spans 278 residues: uncharacterized protein (278 aa).

Residues 127–151 (PPTPSPPPPPAPTQPTRPTPGPAFF) show a composition bias toward pro residues. Residues 127-174 (PPTPSPPPPPAPTQPTRPTPGPAFFPQPFKVELHHPTPKTSSLPAPSL) are disordered. Positions 164–174 (PKTSSLPAPSL) are enriched in low complexity.

This is an uncharacterized protein from Botryotinia fuckeliana (Noble rot fungus).